The sequence spans 303 residues: MRLFNWRRQAVLNAMPLVKPDQVRTPWHEFWRRFRRQHMAMTAALFVILLIVVAIFARWIAPYDAENYFDYDNLNNGPSLQHWFGVDSLGRDIFSRVLVGAQISLAAGVFAVFIGAAIGTLLGLLAGYYEGWWDRLIMRICDVLFAFPGILLAIAVVAVLGSGIANVIIAVAIFSIPAFARLVRGNTLVLKQQTFIESARSIGASDMTILLRHILPGTVSSIVVFFTMRIGTSIISAASLSFLGLGAQPPTPEWGAMLNEARADMVIAPHVAVFPALAIFLTVLAFNLLGDGLRDALDPKIKG.

6 consecutive transmembrane segments (helical) span residues 40-60 (AMTA…ARWI), 105-125 (LAAG…LGLL), 144-164 (LFAF…GSGI), 165-185 (ANVI…LVRG), 222-242 (IVVF…SLSF), and 266-286 (VIAP…VLAF). The ABC transmembrane type-1 domain maps to 101–290 (AQISLAAGVF…LTVLAFNLLG (190 aa)).

The protein belongs to the binding-protein-dependent transport system permease family. As to quaternary structure, the complex is composed of two ATP-binding proteins (GsiA), two transmembrane proteins (GsiC and GsiD) and a solute-binding protein (GsiB).

It localises to the cell inner membrane. Part of the ABC transporter complex GsiABCD involved in glutathione import. Probably responsible for the translocation of the substrate across the membrane. This is Glutathione transport system permease protein GsiD from Escherichia coli O157:H7.